A 367-amino-acid polypeptide reads, in one-letter code: MEEHRLGGGGGGGGGGGRPPIPGAAGRKLPGLSRHASFVRSPANSTKSGTEKTFENMDAVAYMPVVRSGGWADIGSRHTMEDVFICSDNLMKEFGVESFEDGPSAFYGVFDGHGGKHAADFVCSNLARFIVEDEDFPREIEKALSSAFLQTDAAFADACSVNSSLASGTTALAALVVGRSLLVANAGDCRAVLCCRGKAIEMSRDHKPSCNREKVRIEASGGYVYDGYLNGQLNVARAIGDWHMEGMKACDGLGPLSAEPEVMIRNLTEEDEFLIIGCDGIWDVFRSQNAVDFARRKLQEHNDPVTCCKELVDEAIKRKSGDNLSVVVICFNSRPPPVLTTPRPRVQRSISAEGLRELQSFLDSLAD.

The segment at 1–29 (MEEHRLGGGGGGGGGGGRPPIPGAAGRKL) is disordered. Residues 7–18 (GGGGGGGGGGGR) are compositionally biased toward gly residues. Residues 67-331 (RSGGWADIGS…DNLSVVVICF (265 aa)) enclose the PPM-type phosphatase domain. Positions 111, 112, 279, and 322 each coordinate Mn(2+).

The protein belongs to the PP2C family. Mg(2+) is required as a cofactor. Requires Mn(2+) as cofactor.

It carries out the reaction O-phospho-L-seryl-[protein] + H2O = L-seryl-[protein] + phosphate. It catalyses the reaction O-phospho-L-threonyl-[protein] + H2O = L-threonyl-[protein] + phosphate. The protein is Probable protein phosphatase 2C 57 of Oryza sativa subsp. japonica (Rice).